We begin with the raw amino-acid sequence, 190 residues long: Frataxin homolog, mitochondrial (190 aa).

This sequence belongs to the frataxin family. Monomer (probable predominant form). Oligomer. Interacts with IscU. Component of the mitochondrial core iron-sulfur cluster (ISC) assembly complex at least composed of the cysteine desulfurase Nfs1, the scaffold protein IscU, the accessory protein bcn92/Isd11/Lyrm4, and probably fh/frataxin.

It is found in the mitochondrion. The enzyme catalyses 4 Fe(2+) + O2 + 4 H(+) = 4 Fe(3+) + 2 H2O. In terms of biological role, promotes the biosynthesis of heme as well as the assembly and repair of iron-sulfur clusters by delivering Fe(2+) to proteins involved in these pathways. May play a role in the protection against iron-catalyzed oxidative stress through its ability to catalyze the oxidation of Fe(2+) to Fe(3+). May be able to store large amounts of the metal in the form of a ferrihydrite mineral by oligomerization. Required for ecdysteroidogenesis in the prothoracic gland which is necessary for larval to pupal transition. The polypeptide is Frataxin homolog, mitochondrial (Drosophila melanogaster (Fruit fly)).